The primary structure comprises 239 residues: Ribosomal RNA small subunit methyltransferase G (239 aa).

S-adenosyl-L-methionine is bound by residues Gly77, Phe82, 128–129 (AE), and Arg147.

It belongs to the methyltransferase superfamily. RNA methyltransferase RsmG family.

It is found in the cytoplasm. Specifically methylates the N7 position of guanine in position 535 of 16S rRNA. The protein is Ribosomal RNA small subunit methyltransferase G of Bacillus anthracis (strain A0248).